The following is a 106-amino-acid chain: SH3 domain-binding glutamic acid-rich-like protein 2-B (106 aa).

The SH3-binding motif lies at 61–67 (QGNPLPP).

The protein belongs to the SH3BGR family.

The protein resides in the nucleus. This chain is SH3 domain-binding glutamic acid-rich-like protein 2-B (sh3bgrl2-b), found in Xenopus laevis (African clawed frog).